Here is a 1615-residue protein sequence, read N- to C-terminus: Ras-responsive element-binding protein 1 (1615 aa).

A disordered region spans residues methionine 1–lysine 44. Positions glycine 15–proline 28 are enriched in polar residues. 3 C2H2-type zinc fingers span residues tyrosine 47–histidine 69, histidine 78–histidine 100, and tyrosine 106–histidine 128. Residues isoleucine 127 to alanine 169 form a disordered region. The span at lysine 145 to lysine 154 shows a compositional bias: basic residues. 3 consecutive C2H2-type zinc fingers follow at residues tyrosine 189–histidine 211, leucine 216–histidine 239, and phenylalanine 297–histidine 319. The tract at residues serine 511–glutamine 556 is disordered. A compositionally biased stretch (polar residues) spans serine 535–alanine 549. C2H2-type zinc fingers lie at residues tyrosine 622–histidine 644, tyrosine 650–histidine 672, threonine 732–histidine 754, and phenylalanine 763–histidine 788. 3 disordered regions span residues alanine 1025 to asparagine 1044, aspartate 1058 to glutamate 1104, and lysine 1123 to threonine 1162. Low complexity predominate over residues alanine 1026 to serine 1036. Basic residues predominate over residues threonine 1082–proline 1095. Positions lysine 1123–aspartate 1132 are enriched in polar residues. The C2H2-type 11 zinc finger occupies isoleucine 1170 to histidine 1192. Disordered stretches follow at residues cysteine 1214 to aspartate 1269 and leucine 1313 to lysine 1418. A compositionally biased stretch (acidic residues) spans proline 1242–serine 1262. A C2H2-type 12 zinc finger spans residues histidine 1298–histidine 1320. Basic and acidic residues-rich tracts occupy residues isoleucine 1321–glutamine 1339 and glycine 1388–alanine 1414. 2 consecutive C2H2-type zinc fingers follow at residues lysine 1419–histidine 1441 and tyrosine 1447–histidine 1469. Basic residues predominate over residues arginine 1464–asparagine 1477. Residues arginine 1464 to isoleucine 1585 are disordered. Composition is skewed to basic and acidic residues over residues histidine 1478–glutamate 1493 and proline 1566–arginine 1580.

It belongs to the krueppel C2H2-type zinc-finger protein family. As to expression, broadly expressed, except in brain.

It is found in the nucleus. Functionally, transcription factor that binds specifically to the RAS-responsive elements (RRE) of gene promoters. The chain is Ras-responsive element-binding protein 1 (RREB1) from Gallus gallus (Chicken).